A 452-amino-acid chain; its full sequence is Phosphatidate cytidylyltransferase, mitochondrial (452 aa).

The protein belongs to the TAM41 family. Mg(2+) is required as a cofactor.

Its subcellular location is the mitochondrion inner membrane. The catalysed reaction is a 1,2-diacyl-sn-glycero-3-phosphate + CTP + H(+) = a CDP-1,2-diacyl-sn-glycerol + diphosphate. The protein operates within phospholipid metabolism; CDP-diacylglycerol biosynthesis; CDP-diacylglycerol from sn-glycerol 3-phosphate: step 3/3. In terms of biological role, catalyzes the conversion of phosphatidic acid (PA) to CDP-diacylglycerol (CDP-DAG), an essential intermediate in the synthesis of phosphatidylglycerol, cardiolipin and phosphatidylinositol. This chain is Phosphatidate cytidylyltransferase, mitochondrial (TAMM41), found in Homo sapiens (Human).